A 363-amino-acid polypeptide reads, in one-letter code: MTIYNFSAGPAVLPKPVLVKAQSELLNYQGSSMSVLEVSHRSKEFDDIIKGAERYLRDLMGIPDNYKVIFLQGGASLQFSMIPLNIARGRKAYYHVAGSWGKKAYTEAVKLSKTIPFEPILLASSEESVYDYIPEFDEKEIDPEAAYVHVTTNNTIEGTSLYDIPKTNGVPVIADMSSNILAVKYKVEDFAMIYAGAQKNIGPAGVTVVIIREDMINEEPTLSSMLDYKIQSDASSLYNTPPAYSIYIAKLVFEWVKSLGGVDAMEKANREKSGLLYDYIDSSEFYSNPVRDKKSRSLCNIPFITINKDLDEKFVKEATERGFKNIKGHRSVGGMRASLYNAFPKQGVIELIDFMKTFEAENA.

Arginine 41 lines the L-glutamate pocket. Residues 75 to 76 (AS), tryptophan 100, threonine 155, aspartate 175, and glutamine 198 each bind pyridoxal 5'-phosphate. Position 199 is an N6-(pyridoxal phosphate)lysine (lysine 199). 239–240 (NT) contacts pyridoxal 5'-phosphate.

It belongs to the class-V pyridoxal-phosphate-dependent aminotransferase family. SerC subfamily. As to quaternary structure, homodimer. The cofactor is pyridoxal 5'-phosphate.

Its subcellular location is the cytoplasm. It catalyses the reaction O-phospho-L-serine + 2-oxoglutarate = 3-phosphooxypyruvate + L-glutamate. The enzyme catalyses 4-(phosphooxy)-L-threonine + 2-oxoglutarate = (R)-3-hydroxy-2-oxo-4-phosphooxybutanoate + L-glutamate. It participates in amino-acid biosynthesis; L-serine biosynthesis; L-serine from 3-phospho-D-glycerate: step 2/3. In terms of biological role, catalyzes the reversible conversion of 3-phosphohydroxypyruvate to phosphoserine and of 3-hydroxy-2-oxo-4-phosphonooxybutanoate to phosphohydroxythreonine. This is Phosphoserine aminotransferase from Streptococcus agalactiae serotype III (strain NEM316).